We begin with the raw amino-acid sequence, 217 residues long: Yop proteins translocation protein R (217 aa).

4 helical membrane-spanning segments follow: residues 11–31 (IIVLSLLTLLPLISVMATSFV), 53–73 (MAMYGLAIILSLYVMAPVGFA), 157–177 (IGFLIYLPFIVIDLVISNILL), and 181–201 (MMMVSPMTISLPFKLLLFVLL).

It belongs to the FliP/MopC/SpaP family.

Its subcellular location is the cell membrane. Component of the yop secretion machinery. May have a role in the negative pathway regulation of yop expression controlled by calcium. This chain is Yop proteins translocation protein R (yscR), found in Yersinia pestis.